A 1045-amino-acid polypeptide reads, in one-letter code: MPIVMDMNMLLMLSLAFTVMAPASASSSRFTQPPQSQAIVENDAADFSCEATGPSGDLHYEWLHNGQQIGYDSRVLQIGSNLRIESVQREDAGDYVCIAASAASGARQASPPAKLSVIFLDAVTVQLLGSNRNELLLKCHVEGASGDEPLQIEWYRDSAKLSSWQNVELQQHRLLVRQPSSADDGLYRCIASNAAARVMSKQGYVYEHLASVAPGSTKCLPKLKRNQKMPESWGKQVFLCRGKRGGSTGMDQSQSLPPSPEGLRIVQGPNDKLIIKEGEPTTLSCLYELPAELQNQRIQLRWRKDGKILRHVELGDAVVPGLALDHGKDALVREDGRLVLHKQNGTLSFNSIIASDAGQYMCQIQLEGHAPVNSAPGALEVIEQLKFMPQPTSKNLELGALGKLHCKAQGTPTPQVQWLRDAANGSLPEHVDDINGTLIFRNVSAEHRGNYTCVASNSQGQINATVAINVVVAPRFSVAPEGPIESSEQGVAVIHCQAIGDPKPTIQWDKDLKYLSENNTDRQRFSFLENGTLEIRNVQAEDEGKYGCTIGNSAGLKREEVRLLVRGNGDGFITEESAGDGFLVTRAVLITMTVALAYIVLVVGLMLWCRYRRQARKARLNELSIKEAGGDQAESGKNTEQEPCLSKQRNGHGKSRTAANGDAQKSDDTACSQQSKASKKSAHIYEQLALPRSGLSELIQIGRGEFGDVFVGKLKASLVAAASPSDKDADTEKQHSNSENGSGASGASGCGSGSTTLSTLNEKRRSKTSMDDIEEIKEEEQPQEQAQSESTADLLVMVKALNKVKDEQACQEFRRQLDLLRAISHKGVVRLFGLCREKDPHYMVLEYTDWGDLKQFLLATAGKVNTATATSSPPPLTTSQLLAVAYQIARGMDAIYRARFTHRDLATRNCVISSEFIVKVAYPALCKDKYSREYHKHRNTLLPVRWLAPECIQEDEYTTKSDIFAFAVVVWELFNQATKLPHEDLSNEQVVQRSLANTLEWSVAEGTPDGLKEILLSCWLTNPKERPSFSQLGAALSKAMQAAEK.

The first 25 residues, 1 to 25 (MPIVMDMNMLLMLSLAFTVMAPASA), serve as a signal peptide directing secretion. Ig-like C2-type domains lie at 26–116 (SSSR…AKLS), 115–200 (LSVI…RVMS), 260–373 (PEGL…APVN), 376–469 (PGAL…VAIN), and 474–564 (PRFS…VRLL). At 26–587 (SSSRFTQPPQ…AGDGFLVTRA (562 aa)) the chain is on the extracellular side. Disulfide bonds link Cys49-Cys97, Cys139-Cys189, Cys285-Cys362, and Cys406-Cys453. Asn344, Asn424, Asn435, Asn442, Asn450, Asn463, Asn518, and Asn530 each carry an N-linked (GlcNAc...) asparagine glycan. The cysteines at positions 496 and 548 are disulfide-linked. The helical transmembrane segment at 588–608 (VLITMTVALAYIVLVVGLMLW) threads the bilayer. Residues 609–1045 (CRYRRQARKA…LSKAMQAAEK (437 aa)) lie on the Cytoplasmic side of the membrane. Residues 628–676 (AGGDQAESGKNTEQEPCLSKQRNGHGKSRTAANGDAQKSDDTACSQQSK) are disordered. A Phosphoserine modification is found at Ser681. The region spanning 695 to 1040 (LSELIQIGRG…QLGAALSKAM (346 aa)) is the Protein kinase; inactive domain. A disordered region spans residues 722-790 (ASPSDKDADT…QPQEQAQSES (69 aa)). The segment covering 725–736 (SDKDADTEKQHS) has biased composition (basic and acidic residues). The segment covering 743-752 (GASGASGCGS) has biased composition (gly residues). Acidic residues predominate over residues 771-782 (DDIEEIKEEEQP).

This sequence belongs to the protein kinase superfamily. Tyr protein kinase family. Insulin receptor subfamily. Interacts with plexA; component of a receptor complex that mediates the repulsive signaling in response to Semaphorin ligands.

It localises to the cell membrane. Functionally, acts as a calcium-dependent, homophilic cell adhesion molecule that regulates neural recognition during the development of the nervous system. Component of the repulsive Plexin signaling response to regulate motor axon guidance at the embryonic stage. Also component of a receptor complex that is required in the adult visual system to innervate the lamina layer; specific targeting of R1-R6 axons. This Drosophila mojavensis (Fruit fly) protein is Tyrosine-protein kinase-like otk.